A 77-amino-acid chain; its full sequence is U11-lycotoxin-Ls1d (77 aa).

Residues 1 to 20 (MKLIIFTGLVLFAIVSLIEA) form the signal peptide. Positions 21 to 26 (EEESGR) are excised as a propeptide.

The protein belongs to the neurotoxin 19 (CSTX) family. 10 (U11-Lctx) subfamily. Post-translationally, contains 4 disulfide bonds. Expressed by the venom gland.

It localises to the secreted. The protein is U11-lycotoxin-Ls1d of Lycosa singoriensis (Wolf spider).